The following is a 307-amino-acid chain: Dioxygenase swnH1 (307 aa).

Fe cation is bound by residues histidine 149, aspartate 151, and histidine 227.

The protein belongs to the PhyH family. Homodimer. It depends on Fe cation as a cofactor.

It functions in the pathway mycotoxin biosynthesis. Its function is as follows. Dioxygenase; part of the gene cluster that mediates the biosynthesis of swainsonine (SW), a cytotoxic fungal alkaloid and a potential cancer therapy drug. Swainsonine production occurs via a multibranched pathway and is dispensable for fungal colonization of plants and infection of insect hosts. The first step of swainsonine biosynthesis is the production of the precursor pipecolic acid (PA) via conversion of L-lysine (Lys) to 1-piperideine-6-carboxylate (P6C) by the aminotransferase swnA, the latter being further reduced to PA by the reductase swnR. The PKS-NRPS hybrid synthetase swnK uptakes and condensates PA and malonyl-CoA with and without skipping of the ketoreductase (KR) domain in order to produce 3 intermediates, 1-oxoindolizidine, (1S)-1-hydroxyindolizin, and (1R)-1-hydroxyindolizine; with the transisomer (1S)-1-hydroxyindolizin being predominant. The terminal thioester reductase (TE) domain of swnK is involved in reduction of the thioester bond to release the intermediate aldehydes. The oxidoreductase swnN could contribute to the reduction of 1-oxoindolizidine to (1S)-1-hydroxyindolizin and (1R)-1-hydroxyindolizine, contributing to the major route of SW production. The dioxygenase swnH2 would be responsible for the oxidization of (1R)-1-hydroxyindolizine into (1R,2S)-1,2-dihydroxyindolizine and of (1S)-1-hydroxyindolizin to yield both (1R,2S)-1,2-dihydroxyindolizine and (1S,2S)-1,2-dihydroxyindolizine. The dioxygenase swnH1 then performs the conversion of the 1,2-dihydroxyindolizine epimers to SW. The polypeptide is Dioxygenase swnH1 (Arthroderma benhamiae (strain ATCC MYA-4681 / CBS 112371) (Trichophyton mentagrophytes)).